Here is a 252-residue protein sequence, read N- to C-terminus: Chitooligosaccharide deacetylase (252 aa).

Mg(2+) contacts are provided by His61 and His125.

This sequence belongs to the YdjC deacetylase family. ChbG subfamily. As to quaternary structure, homodimer. Requires Mg(2+) as cofactor.

The protein localises to the cytoplasm. It carries out the reaction N,N'-diacetylchitobiose + H2O = N-acetyl-beta-D-glucosaminyl-(1-&gt;4)-D-glucosamine + acetate. The catalysed reaction is diacetylchitobiose-6'-phosphate + H2O = N'-monoacetylchitobiose-6'-phosphate + acetate. It participates in glycan degradation; chitin degradation. Involved in the degradation of chitin. ChbG is essential for growth on the acetylated chitooligosaccharides chitobiose and chitotriose but is dispensable for growth on cellobiose and chitosan dimer, the deacetylated form of chitobiose. Deacetylation of chitobiose-6-P and chitotriose-6-P is necessary for both the activation of the chb promoter by the regulatory protein ChbR and the hydrolysis of phosphorylated beta-glucosides by the phospho-beta-glucosidase ChbF. Catalyzes the removal of only one acetyl group from chitobiose-6-P to yield monoacetylchitobiose-6-P, the inducer of ChbR and the substrate of ChbF. The polypeptide is Chitooligosaccharide deacetylase (Escherichia coli O8 (strain IAI1)).